A 311-amino-acid polypeptide reads, in one-letter code: MIVTGVLLFILLELFAQGSQAFKALDPEEAWYVYERCHEDHLPSGPNRETYLKTWKFWKLEPNDAVTHCYVKCTLAGLQMYDEKTNTFKPETVPVQHEAYKSFTEVESSKVNELQQALSSLNAGSGSCAEVFNAYLPVHNKYVGVSRKIYHGTVDSVAKIYEAKPEIKKQEESFFAYCAKKALGANGKEGYTKLRDYELADSAEFRNAMDCVFRGFRYMDDSGLKVDEVVRDFNLINKSDLEPEVRSVLASCTGTQAYDYYSCLLNSPVKEDFRNAFYFHELRSANYGYLAMGKVYEGPEKVKEELKKLNY.

Residues 1–21 form the signal peptide; that stretch reads MIVTGVLLFILLELFAQGSQA. Cystine bridges form between Cys-37–Cys-73, Cys-69–Cys-128, Cys-178–Cys-211, and Cys-252–Cys-263.

The protein belongs to the PBP/GOBP family.

The protein resides in the secreted. Modulates blood feeding of female mosquitoes on vertebrate species by binding and sequestering different mediators involved in the host response. Binds leukotriene C4 and U-46619, a stable analog of thromboxane A2. Inhibits agonist-induced platelet aggregation. Exhibits vasodilating activity. The chain is Long form salivary protein D7L1 from Anopheles gambiae (African malaria mosquito).